The primary structure comprises 77 residues: P fimbrial regulatory protein KS71A (77 aa).

The chain is P fimbrial regulatory protein KS71A (KS71A) from Escherichia coli.